Here is a 234-residue protein sequence, read N- to C-terminus: 2-C-methyl-D-erythritol 4-phosphate cytidylyltransferase (234 aa).

Belongs to the IspD/TarI cytidylyltransferase family. IspD subfamily.

It catalyses the reaction 2-C-methyl-D-erythritol 4-phosphate + CTP + H(+) = 4-CDP-2-C-methyl-D-erythritol + diphosphate. Its pathway is isoprenoid biosynthesis; isopentenyl diphosphate biosynthesis via DXP pathway; isopentenyl diphosphate from 1-deoxy-D-xylulose 5-phosphate: step 2/6. In terms of biological role, catalyzes the formation of 4-diphosphocytidyl-2-C-methyl-D-erythritol from CTP and 2-C-methyl-D-erythritol 4-phosphate (MEP). The chain is 2-C-methyl-D-erythritol 4-phosphate cytidylyltransferase from Desulforamulus reducens (strain ATCC BAA-1160 / DSM 100696 / MI-1) (Desulfotomaculum reducens).